The following is a 772-amino-acid chain: Phosphoribosylformylglycinamidine synthase subunit PurL (772 aa).

H62 is a catalytic residue. The ATP site is built by Y65 and K109. E111 contributes to the Mg(2+) binding site. Residues 112–115 (SHNH) and R134 contribute to the substrate site. The active-site Proton acceptor is the H113. Residue D135 participates in Mg(2+) binding. Q259 contacts substrate. D287 contacts Mg(2+). Position 331–333 (331–333 (ESQ)) interacts with substrate. D519 and G556 together coordinate ATP. Residue N557 coordinates Mg(2+). S559 is a substrate binding site.

Belongs to the FGAMS family. As to quaternary structure, monomer. Part of the FGAM synthase complex composed of 1 PurL, 1 PurQ and 2 PurS subunits.

The protein resides in the cytoplasm. It catalyses the reaction N(2)-formyl-N(1)-(5-phospho-beta-D-ribosyl)glycinamide + L-glutamine + ATP + H2O = 2-formamido-N(1)-(5-O-phospho-beta-D-ribosyl)acetamidine + L-glutamate + ADP + phosphate + H(+). Its pathway is purine metabolism; IMP biosynthesis via de novo pathway; 5-amino-1-(5-phospho-D-ribosyl)imidazole from N(2)-formyl-N(1)-(5-phospho-D-ribosyl)glycinamide: step 1/2. Functionally, part of the phosphoribosylformylglycinamidine synthase complex involved in the purines biosynthetic pathway. Catalyzes the ATP-dependent conversion of formylglycinamide ribonucleotide (FGAR) and glutamine to yield formylglycinamidine ribonucleotide (FGAM) and glutamate. The FGAM synthase complex is composed of three subunits. PurQ produces an ammonia molecule by converting glutamine to glutamate. PurL transfers the ammonia molecule to FGAR to form FGAM in an ATP-dependent manner. PurS interacts with PurQ and PurL and is thought to assist in the transfer of the ammonia molecule from PurQ to PurL. This Leifsonia xyli subsp. xyli (strain CTCB07) protein is Phosphoribosylformylglycinamidine synthase subunit PurL.